The sequence spans 352 residues: UDP-N-acetylglucosamine--N-acetylmuramyl-(pentapeptide) pyrophosphoryl-undecaprenol N-acetylglucosamine transferase (352 aa).

UDP-N-acetyl-alpha-D-glucosamine is bound by residues 13–15 (TGG), Asn125, Arg161, Ser189, Ile242, 261–266 (ALTVSE), and Gln286.

Belongs to the glycosyltransferase 28 family. MurG subfamily.

Its subcellular location is the cell inner membrane. The catalysed reaction is di-trans,octa-cis-undecaprenyl diphospho-N-acetyl-alpha-D-muramoyl-L-alanyl-D-glutamyl-meso-2,6-diaminopimeloyl-D-alanyl-D-alanine + UDP-N-acetyl-alpha-D-glucosamine = di-trans,octa-cis-undecaprenyl diphospho-[N-acetyl-alpha-D-glucosaminyl-(1-&gt;4)]-N-acetyl-alpha-D-muramoyl-L-alanyl-D-glutamyl-meso-2,6-diaminopimeloyl-D-alanyl-D-alanine + UDP + H(+). It functions in the pathway cell wall biogenesis; peptidoglycan biosynthesis. Its function is as follows. Cell wall formation. Catalyzes the transfer of a GlcNAc subunit on undecaprenyl-pyrophosphoryl-MurNAc-pentapeptide (lipid intermediate I) to form undecaprenyl-pyrophosphoryl-MurNAc-(pentapeptide)GlcNAc (lipid intermediate II). The protein is UDP-N-acetylglucosamine--N-acetylmuramyl-(pentapeptide) pyrophosphoryl-undecaprenol N-acetylglucosamine transferase of Erwinia tasmaniensis (strain DSM 17950 / CFBP 7177 / CIP 109463 / NCPPB 4357 / Et1/99).